A 427-amino-acid polypeptide reads, in one-letter code: Protein phosphatase methylesterase 1 (427 aa).

The interval Met1–Arg49 is disordered. The span at Ser36 to Arg49 shows a compositional bias: polar residues. Active-site residues include Ser207, Asp233, and His364. Residues Ser402 to Pro427 are disordered.

Belongs to the AB hydrolase superfamily.

It carries out the reaction [phosphatase 2A protein]-C-terminal L-leucine methyl ester + H2O = [phosphatase 2A protein]-C-terminal L-leucine + methanol + H(+). Functionally, demethylates proteins that have been reversibly carboxymethylated. Demethylates the phosphatase PP2A catalytic subunit. The protein is Protein phosphatase methylesterase 1 (ppe1) of Aspergillus oryzae (strain ATCC 42149 / RIB 40) (Yellow koji mold).